Reading from the N-terminus, the 118-residue chain is SPbeta prophage-derived uncharacterized protein YolB (118 aa).

This Bacillus subtilis (strain 168) protein is SPbeta prophage-derived uncharacterized protein YolB (yolB).